A 344-amino-acid chain; its full sequence is Methionine import ATP-binding protein MetN (344 aa).

The 240-residue stretch at 2-241 folds into the ABC transporter domain; sequence IELQGLSQRF…PQHDVTRAMI (240 aa). Residue 38 to 45 participates in ATP binding; the sequence is GRSGAGKS.

This sequence belongs to the ABC transporter superfamily. Methionine importer (TC 3.A.1.24) family. In terms of assembly, the complex is composed of two ATP-binding proteins (MetN), two transmembrane proteins (MetI) and a solute-binding protein (MetQ).

Its subcellular location is the cell inner membrane. The catalysed reaction is L-methionine(out) + ATP + H2O = L-methionine(in) + ADP + phosphate + H(+). The enzyme catalyses D-methionine(out) + ATP + H2O = D-methionine(in) + ADP + phosphate + H(+). In terms of biological role, part of the ABC transporter complex MetNIQ involved in methionine import. Responsible for energy coupling to the transport system. This Cupriavidus necator (strain ATCC 17699 / DSM 428 / KCTC 22496 / NCIMB 10442 / H16 / Stanier 337) (Ralstonia eutropha) protein is Methionine import ATP-binding protein MetN.